The chain runs to 194 residues: Large ribosomal subunit protein bL25B (194 aa).

It belongs to the bacterial ribosomal protein bL25 family. CTC subfamily. As to quaternary structure, part of the 50S ribosomal subunit; part of the 5S rRNA/L5/L18/L25 subcomplex. Contacts the 5S rRNA. Binds to the 5S rRNA independently of L5 and L18.

Its function is as follows. This is one of the proteins that binds to the 5S RNA in the ribosome where it forms part of the central protuberance. This is Large ribosomal subunit protein bL25B from Symbiobacterium thermophilum (strain DSM 24528 / JCM 14929 / IAM 14863 / T).